A 231-amino-acid chain; its full sequence is Large ribosomal subunit protein uL5m (231 aa).

The protein belongs to the universal ribosomal protein uL5 family.

It localises to the mitochondrion. This chain is Large ribosomal subunit protein uL5m (RPL5), found in Prototheca wickerhamii.